We begin with the raw amino-acid sequence, 727 residues long: Prolyl endopeptidase-like (727 aa).

Residues S559, D645, and H690 each act as charge relay system in the active site.

This sequence belongs to the peptidase S9A family. Homodimer. Interacts with the AP-1 complex.

It is found in the cytoplasm. It localises to the cytosol. Its subcellular location is the golgi apparatus. The protein resides in the trans-Golgi network. The protein localises to the cytoskeleton. It is found in the nucleus. Serine peptidase whose precise substrate specificity remains unclear. Does not cleave peptides after a arginine or lysine residue. Regulates trans-Golgi network morphology and sorting by regulating the membrane binding of the AP-1 complex. May play a role in the regulation of synaptic vesicle exocytosis. The protein is Prolyl endopeptidase-like (PREPL) of Pongo abelii (Sumatran orangutan).